Reading from the N-terminus, the 444-residue chain is ATP-dependent protease ATPase subunit HslU (444 aa).

Residues isoleucine 20 and 62-67 (GVGKTE) contribute to the ATP site. The interval 130–158 (EDRILDALVPPPRGASGEPERGEDNSARQ) is disordered. ATP contacts are provided by aspartate 257, glutamate 322, and arginine 394.

It belongs to the ClpX chaperone family. HslU subfamily. In terms of assembly, a double ring-shaped homohexamer of HslV is capped on each side by a ring-shaped HslU homohexamer. The assembly of the HslU/HslV complex is dependent on binding of ATP.

The protein localises to the cytoplasm. Its function is as follows. ATPase subunit of a proteasome-like degradation complex; this subunit has chaperone activity. The binding of ATP and its subsequent hydrolysis by HslU are essential for unfolding of protein substrates subsequently hydrolyzed by HslV. HslU recognizes the N-terminal part of its protein substrates and unfolds these before they are guided to HslV for hydrolysis. This Bordetella pertussis (strain Tohama I / ATCC BAA-589 / NCTC 13251) protein is ATP-dependent protease ATPase subunit HslU.